The following is a 378-amino-acid chain: Beta-1,3-galactosyltransferase 4 (378 aa).

At 1–8 the chain is on the cytoplasmic side; the sequence is MQLRLFRR. Residues 9 to 19 form a helical; Signal-anchor for type II membrane protein membrane-spanning segment; sequence LLLAALLLVIV. The Lumenal segment spans residues 20–378; the sequence is WTLFGPSGLG…RCRAIAWLQS (359 aa). N-linked (GlcNAc...) asparagine glycosylation is present at Asn-149.

The protein belongs to the glycosyltransferase 31 family. As to expression, highly expressed in heart, skeletal muscle and pancreas and, to a lesser extent, in brain, placenta, kidney, liver and lung.

Its subcellular location is the golgi apparatus membrane. The catalysed reaction is a ganglioside GM2 (d18:1(4E)) + UDP-alpha-D-galactose = a ganglioside GM1 (d18:1(4E)) + UDP + H(+). It carries out the reaction a ganglioside GM2 + UDP-alpha-D-galactose = a ganglioside GM1 + UDP + H(+). The enzyme catalyses a ganglioside GD2 (d18:1(4E)) + UDP-alpha-D-galactose = a ganglioside GD1b (d18:1(4E)) + UDP + H(+). It catalyses the reaction a ganglioside GA2 (d18:1(4E)) + UDP-alpha-D-galactose = a ganglioside GA1 (d18:1(4E)) + UDP + H(+). The protein operates within protein modification; protein glycosylation. Its function is as follows. Involved in GM1/GD1B/GA1 ganglioside biosynthesis. The chain is Beta-1,3-galactosyltransferase 4 from Homo sapiens (Human).